Reading from the N-terminus, the 146-residue chain is Prepilin peptidase-dependent protein D (146 aa).

Positions 1–6 (MDKQRG) are cleaved as a propeptide — leader sequence. Phenylalanine 7 is modified (N-methylphenylalanine). Residues 7–27 (FTLIELMVVIGIIAILSAIGI) form a helical membrane-spanning segment.

Belongs to the N-Me-Phe pilin family.

It is found in the fimbrium. The protein localises to the membrane. Major component of the type IV pilus (T4P) that plays a role in cell adhesion and motility. Not produced when grown under standard laboratory conditions. The protein is Prepilin peptidase-dependent protein D (ppdD) of Escherichia coli (strain K12).